The chain runs to 571 residues: OTU domain-containing protein 5 (571 aa).

Disordered regions lie at residues 1–111 (MTIL…GPGG) and 146–175 (PGHS…GAGY). Pro residues predominate over residues 11-30 (PPDADPANEPPPPGPMPPAP). The segment covering 32 to 47 (RGGGVGVGGGGTGVGG) has biased composition (gly residues). A compositionally biased stretch (pro residues) spans 63-75 (ASPPPQGPLPGPP). Ser64 carries the phosphoserine modification. Residues 84-97 (AVPPGAVAGPRPQQ) are compositionally biased toward low complexity. Phosphoserine is present on Ser165. The residue at position 175 (Tyr175) is a Phosphotyrosine. Residue Ser177 is modified to Phosphoserine. Thr195 is modified (phosphothreonine). Residues 213–341 (FIIKQMKEDG…NIHYNSVVNP (129 aa)) form the OTU domain. Residues 218 to 224 (MKEDGAC) form a cys-loop region. Asp221 is a catalytic residue. Cys224 serves as the catalytic Nucleophile. The tract at residues 273 to 283 (KRKNNCHGNHI) is variable-loop. Residue Ser328 is modified to Phosphoserine; by MTOR. Residues 329 to 334 (YHRNIH) form a his-loop region. Residue His334 is part of the active site. Phosphoserine occurs at positions 337 and 375. Residues 418–502 (ARQVRGPSQP…PGTSSQFSAG (85 aa)) form a disordered region. 2 stretches are compositionally biased toward low complexity: residues 430–443 (ASAT…AASS) and 450–462 (SRSP…ASSP). Ser452 is subject to Phosphoserine. A Phosphothreonine modification is found at Thr507. A Phosphoserine; by MTOR modification is found at Ser508.

Belongs to the peptidase C85 family. In terms of assembly, interacts with TRAF3. Post-translationally, phosphorylation at Ser-177 is required for deubiquitinating activity. Phosphorylation at Ser-328, Ser-337 and Ser-508 by MTOR promotes its activity. In terms of tissue distribution, expressed in various tissues, including the liver and placenta, as well as in peripheral blood leukocytes.

It localises to the nucleus. It catalyses the reaction Thiol-dependent hydrolysis of ester, thioester, amide, peptide and isopeptide bonds formed by the C-terminal Gly of ubiquitin (a 76-residue protein attached to proteins as an intracellular targeting signal).. With respect to regulation, inhibited by N-ethyl-maleimide (NEM). In terms of biological role, deubiquitinating enzyme that functions as a negative regulator of the innate immune system. Has peptidase activity towards 'Lys-48'- and 'Lys-63'-linked polyubiquitin chains. Can also cleave 'Lys-11'-linked ubiquitin chains (in vitro). Acts via TRAF3 deubiquitination and subsequent suppression of type I interferon (IFN) production. Controls neuroectodermal differentiation through cleaving 'Lys-48'-linked ubiquitin chains to counteract degradation of select chromatin regulators such as ARID1A, HDAC2 and HCF1. Acts as a positive regulator of mTORC1 and mTORC2 signaling following phosphorylation by MTOR: acts by mediating deubiquitination of BTRC, leading to its stability. The protein is OTU domain-containing protein 5 of Homo sapiens (Human).